A 279-amino-acid chain; its full sequence is 4-diphosphocytidyl-2-C-methyl-D-erythritol kinase (279 aa).

Residue lysine 9 is part of the active site. Proline 93–serine 103 provides a ligand contact to ATP. Aspartate 135 is an active-site residue.

Belongs to the GHMP kinase family. IspE subfamily.

It catalyses the reaction 4-CDP-2-C-methyl-D-erythritol + ATP = 4-CDP-2-C-methyl-D-erythritol 2-phosphate + ADP + H(+). The protein operates within isoprenoid biosynthesis; isopentenyl diphosphate biosynthesis via DXP pathway; isopentenyl diphosphate from 1-deoxy-D-xylulose 5-phosphate: step 3/6. Catalyzes the phosphorylation of the position 2 hydroxy group of 4-diphosphocytidyl-2C-methyl-D-erythritol. The polypeptide is 4-diphosphocytidyl-2-C-methyl-D-erythritol kinase (Acinetobacter baylyi (strain ATCC 33305 / BD413 / ADP1)).